An 88-amino-acid polypeptide reads, in one-letter code: Small integral membrane protein 13 (88 aa).

The chain crosses the membrane as a helical span at residues 10–30 (LVFVATLLIVLLLMVCGWYFV). Positions 48–60 (TGSQEGDNEQPSG) are enriched in polar residues. The disordered stretch occupies residues 48–88 (TGSQEGDNEQPSGSEAEEDPSASPHKMRSARQRRPPVDDGH). Phosphoserine is present on residues serine 59, serine 61, and serine 70. The segment covering 72 to 81 (HKMRSARQRR) has biased composition (basic residues).

Belongs to the SMIM13 family.

It is found in the membrane. The polypeptide is Small integral membrane protein 13 (Smim13) (Rattus norvegicus (Rat)).